A 324-amino-acid chain; its full sequence is MAQITLSAEIQLSQLGQRLDQALAELFPDYSRSRLKTWIEQNLVHVNGDVVNVPRAKVYGGEQIEIVVEIDDDTRFEPENLPLNIVYEDDDILVINKPKDFVVHPGAGNASGTVLNALLYHYPAIAEVPRAGIVHRLDKDTTGLMVIAKTIPAQTKLVRDLQKRKITREYEAIACGIMTKGGMVDQPMARHPTKRTHMAVHPMGKPAVTHYRIMERFRNYTRLRLRLETGRTHQIRVHMAHIAHPLLGDQTYGGRPRPPKNASEELMQTLRDFKRQALHAIMLRLAHPITGELMEWHAPLPTDFVELVEALKADYQLHQDDLDY.

In terms of domain architecture, S4 RNA-binding spans 17 to 90; sequence QRLDQALAEL…LPLNIVYEDD (74 aa). Residue aspartate 138 is part of the active site.

It belongs to the pseudouridine synthase RluA family.

It localises to the cytoplasm. It catalyses the reaction uridine(1911/1915/1917) in 23S rRNA = pseudouridine(1911/1915/1917) in 23S rRNA. Functionally, responsible for synthesis of pseudouridine from uracil at positions 1911, 1915 and 1917 in 23S ribosomal RNA. The polypeptide is Ribosomal large subunit pseudouridine synthase D (rluD) (Pasteurella multocida (strain Pm70)).